Consider the following 206-residue polypeptide: Ras-related protein Ral-A (206 aa).

21 to 28 lines the GTP pocket; that stretch reads GSGGVGKS. Positions 43-51 match the Effector region motif; that stretch reads YEPTKADSY. Residues 68-72 and 127-130 each bind GTP; these read DTAGQ and NKSD. Residue serine 194 is modified to Phosphoserine. Cysteine 203 bears the Cysteine methyl ester mark. A lipid anchor (S-geranylgeranyl cysteine) is attached at cysteine 203. Positions 204 to 206 are cleaved as a propeptide — removed in mature form; the sequence is CIL.

It belongs to the small GTPase superfamily. Ras family. Interacts (via effector domain) with RALBP1; during mitosis, recruits RALBP1 to the mitochondrion where it promotes DNM1L phosphorylation and mitochondrial fission. Interacts with EXOC2/Sec5 and EXOC8/Exo84; binding to EXOC2 and EXOC8 is mutually exclusive. Interacts with Clostridium exoenzyme C3. Interacts with RALGPS1. Interacts with LPAR1 and LPAR2. Interacts with GRK2 in response to LPAR1 activation. RALA and GRK2 binding to LPAR1 is mutually exclusive. Interacts with CDC42. Prenylation is essential for membrane localization. In terms of processing, phosphorylated. Phosphorylation at Ser-194 by AURKA/Aurora kinase A, during mitosis, induces RALA localization to the mitochondrion where it regulates mitochondrial fission.

The protein resides in the cell membrane. Its subcellular location is the cleavage furrow. It is found in the midbody. The protein localises to the midbody ring. It localises to the mitochondrion. It catalyses the reaction GTP + H2O = GDP + phosphate + H(+). With respect to regulation, alternates between an inactive form bound to GDP and an active form bound to GTP. Activated by a guanine nucleotide-exchange factor (GEF) and inactivated by a GTPase-activating protein (GAP). In terms of biological role, multifunctional GTPase involved in a variety of cellular processes including gene expression, cell migration, cell proliferation, oncogenic transformation and membrane trafficking. Accomplishes its multiple functions by interacting with distinct downstream effectors. Acts as a GTP sensor for GTP-dependent exocytosis of dense core vesicles. Key regulator of LPAR1 signaling and competes with GRK2 for binding to LPAR1 thus affecting the signaling properties of the receptor. Required for anchorage-independent proliferation of transformed cells. The RALA-exocyst complex regulates integrin-dependent membrane raft exocytosis and growth signaling. During mitosis, supports the stabilization and elongation of the intracellular bridge between dividing cells. Cooperates with EXOC2 to recruit other components of the exocyst to the early midbody. During mitosis, also controls mitochondrial fission by recruiting to the mitochondrion RALBP1, which mediates the phosphorylation and activation of DNM1L by the mitotic kinase cyclin B-CDK1. The protein is Ras-related protein Ral-A (Rala) of Mus musculus (Mouse).